The primary structure comprises 492 residues: Spore germination protein GerLA (492 aa).

The next 3 membrane-spanning stretches (helical) occupy residues 295–315 (IIAV…QGLI), 384–404 (FLVI…VYSI), and 410–430 (ILLF…IILA).

It belongs to the GerABKA family.

The protein resides in the membrane. Contributes to the L-alanine germination response. This chain is Spore germination protein GerLA (gerLA), found in Bacillus cereus.